The primary structure comprises 863 residues: Scm-like with four MBT domains protein 1 (863 aa).

MBT repeat units follow at residues 20 to 120 (FSWE…LEAP), 128 to 232 (SDWS…LQPP), 242 to 346 (ADWQ…INPP), and 354 to 451 (FDWA…LSTP). A disordered region spans residues 638-773 (KKKNKRIGRP…SDGENKPPSP (136 aa)). Over residues 660–679 (KTSKRRKRRKNIFVHKKKRS) the composition is skewed to basic residues. The span at 680–691 (SASVDNTPVGSP) shows a compositional bias: polar residues. A compositionally biased stretch (acidic residues) spans 696–710 (GEDEDDADDGDDDSL). A phosphoserine mark is found at serine 764 and serine 772. The region spanning 793–861 (WSVADVVRFI…RIKFAFYEQF (69 aa)) is the SAM domain.

As to quaternary structure, interacts with MYOD1. Component of the SLC (SFMBT1-LSD1-CoREST) corepressor complex, which also contains KDM1A/LSD1 and RCOR1/CoREST. Interacts with KDM1A/LSD1 and RCOR1/CoREST. Interacts with MYOD1. Interacts with L3MBTL3. As to expression, highly expressed in the testis, low expression was detected in brain, kidney, heart and lung.

The protein localises to the nucleus. Histone-binding protein, which is part of various corepressor complexes. Mediates the recruitment of corepressor complexes to target genes, followed by chromatin compaction and repression of transcription. Plays a role during myogenesis: required for the maintenance of undifferentiated states of myogenic progenitor cells via interaction with MYOD1. Interaction with MYOD1 leads to the recruitment of associated corepressors and silencing of MYOD1 target genes. Part of the SLC complex in germ cells, where it may play a role during spermatogenesis. This is Scm-like with four MBT domains protein 1 (Sfmbt1) from Rattus norvegicus (Rat).